The primary structure comprises 98 residues: NADH-ubiquinone oxidoreductase chain 4L (98 aa).

The next 3 helical transmembrane spans lie at 1–21 (MPSI…GVLI), 26–46 (LMSS…LVSL), and 61–81 (IILL…LVMV).

It belongs to the complex I subunit 4L family. Core subunit of respiratory chain NADH dehydrogenase (Complex I) which is composed of 45 different subunits.

The protein localises to the mitochondrion inner membrane. The catalysed reaction is a ubiquinone + NADH + 5 H(+)(in) = a ubiquinol + NAD(+) + 4 H(+)(out). Core subunit of the mitochondrial membrane respiratory chain NADH dehydrogenase (Complex I) which catalyzes electron transfer from NADH through the respiratory chain, using ubiquinone as an electron acceptor. Part of the enzyme membrane arm which is embedded in the lipid bilayer and involved in proton translocation. The sequence is that of NADH-ubiquinone oxidoreductase chain 4L (MT-ND4L) from Galago senegalensis (Northern lesser bushbaby).